Consider the following 281-residue polypeptide: MRHTLPHAPQFYVTAPQPCPYLHGRAERKLFTALAGDSANELNNALSRQGFRRSQNVLYRPSCESCVACMSARIRVSEFEPSRTQRRIARRNAHLRRLATSAWATEEQYELFRAYLDERHADGGMADMDIFEFAAMIEETPVRTRVIEYRAHQGDSSEIPPPPDSDQLVAVCLTDVLDDGLSLVYSFYDPALEGFSLGTHIILDHIDLARSAGLPFVYLGYWVPGSRKMDYKAKFSALEIYKGGVWQPIGDPAQHTSDIHPLSIDPIVEQVARINLPSNRR.

Belongs to the R-transferase family. Bpt subfamily.

It is found in the cytoplasm. The catalysed reaction is N-terminal L-glutamyl-[protein] + L-leucyl-tRNA(Leu) = N-terminal L-leucyl-L-glutamyl-[protein] + tRNA(Leu) + H(+). It carries out the reaction N-terminal L-aspartyl-[protein] + L-leucyl-tRNA(Leu) = N-terminal L-leucyl-L-aspartyl-[protein] + tRNA(Leu) + H(+). Functionally, functions in the N-end rule pathway of protein degradation where it conjugates Leu from its aminoacyl-tRNA to the N-termini of proteins containing an N-terminal aspartate or glutamate. The polypeptide is Aspartate/glutamate leucyltransferase (Paracoccus denitrificans (strain Pd 1222)).